The following is a 105-amino-acid chain: Thioredoxin (105 aa).

Residues Val-2 to Ile-105 enclose the Thioredoxin domain. Lys-3 carries the N6-acetyllysine modification. Lys-8 bears the N6-succinyllysine mark. Active-site nucleophile residues include Cys-32 and Cys-35. An intrachain disulfide couples Cys-32 to Cys-35. The residue at position 39 (Lys-39) is an N6-acetyllysine. S-nitrosocysteine occurs at positions 62 and 69. At Cys-73 the chain carries S-nitrosocysteine; alternate. Lys-94 carries the post-translational modification N6-acetyllysine; alternate. At Lys-94 the chain carries N6-succinyllysine; alternate.

This sequence belongs to the thioredoxin family. Homodimer; disulfide-linked. Interacts with TXNIP through the redox-active site. Interacts with MAP3K5 and CASP3. Interacts with APEX1; the interaction stimulates the FOS/JUN AP-1 DNA-binding activity in a redox-dependent manner. Post-translationally, in the fully reduced protein, both Cys-69 and Cys-73 are nitrosylated in response to nitric oxide (NO). When two disulfide bonds are present in the protein, only Cys-73 is nitrosylated. Cys-73 can serve as donor for nitrosylation of target proteins.

Its subcellular location is the nucleus. It localises to the cytoplasm. It is found in the secreted. Functionally, participates in various redox reactions through the reversible oxidation of its active center dithiol to a disulfide and catalyzes dithiol-disulfide exchange reactions. Plays a role in the reversible S-nitrosylation of cysteine residues in target proteins, and thereby contributes to the response to intracellular nitric oxide. Nitrosylates the active site Cys of CASP3 in response to nitric oxide (NO), and thereby inhibits caspase-3 activity. Induces the FOS/JUN AP-1 DNA binding activity in ionizing radiation (IR) cells through its oxidation/reduction status and stimulates AP-1 transcriptional activity. The protein is Thioredoxin (TXN) of Ovis aries (Sheep).